Consider the following 341-residue polypeptide: Fe-S cluster assembly protein DRE2 (341 aa).

An N-terminal SAM-like domain region spans residues 1 to 157; that stretch reads MNTLLLLHPT…FKKLSSPPTL (157 aa). The disordered stretch occupies residues 151-171; it reads LSSPPTLTDSSEADEDEESQL. A linker region spans residues 157-204; the sequence is LTDSSEADEDEESQLNEKLKGSKLIYFDESSDDEIIDEDELLRDDDGA. The segment covering 161–170 has biased composition (acidic residues); the sequence is SEADEDEESQ. Cysteine 215, cysteine 227, cysteine 230, and cysteine 232 together coordinate [2Fe-2S] cluster. The fe-S binding site A stretch occupies residues 215–232; it reads CALPNGKRRKKACKDCTC. Residues cysteine 304, cysteine 307, cysteine 315, and cysteine 318 each coordinate [4Fe-4S] cluster. 2 short sequence motifs (cx2C motif) span residues 304–307 and 315–318; these read CGSC and CDGC. The tract at residues 304–318 is fe-S binding site B; that stretch reads CGSCALGDAFRCDGC.

Belongs to the anamorsin family. In terms of assembly, monomer. Interacts with TAH18. Interacts with MIA40. The cofactor is [2Fe-2S] cluster. Requires [4Fe-4S] cluster as cofactor.

It localises to the cytoplasm. It is found in the mitochondrion intermembrane space. Component of the cytosolic iron-sulfur (Fe-S) protein assembly (CIA) machinery required for the maturation of extramitochondrial Fe-S proteins. Part of an electron transfer chain functioning in an early step of cytosolic Fe-S biogenesis, facilitating the de novo assembly of a [4Fe-4S] cluster on the scaffold complex CFD1-NBP35. Electrons are transferred to DRE2 from NADPH via the FAD- and FMN-containing protein TAH18. TAH18-DRE2 are also required for the assembly of the diferric tyrosyl radical cofactor of ribonucleotide reductase (RNR), probably by providing electrons for reduction during radical cofactor maturation in the catalytic small subunit RNR2. The chain is Fe-S cluster assembly protein DRE2 from Komagataella phaffii (strain GS115 / ATCC 20864) (Yeast).